Consider the following 287-residue polypeptide: Nucleotide-binding protein VP2673 (287 aa).

An ATP-binding site is contributed by 8–15 (GHSGAGKS). 56 to 59 (DIRN) lines the GTP pocket.

The protein belongs to the RapZ-like family.

Functionally, displays ATPase and GTPase activities. This is Nucleotide-binding protein VP2673 from Vibrio parahaemolyticus serotype O3:K6 (strain RIMD 2210633).